Reading from the N-terminus, the 520-residue chain is Type I restriction enzyme EcoR124I/EcoR124II methylase subunit (520 aa).

Residues 10-190 (AELHRQIWQI…YEFLISNYAA (181 aa)) form an N-terminal domain region. Residues 198-203 (EFFTPQ), 230-232 (SGS), and glutamate 254 each bind S-adenosyl-L-methionine. Residues 198–473 (EFFTPQHVSK…NDYNLSVSSY (276 aa)) form a catalytic domain region. A C-terminal tail region spans residues 481-510 (EIIDIAELNAELKTTVSKIDQLRKDIDAIV).

It belongs to the N(4)/N(6)-methyltransferase family. In terms of assembly, the type I restriction/modification system is composed of three polypeptides R, M and S; the restriction enzyme has stoichiometry R(2)M(2)S(1) while the methyltransferase is M(2)S(1). There is an equilibrium between R(2)M(2)S(1) and R(1)M(2)S(1); the latter is methylation and translocation proficient but restriction deficient. (Microbial infection) Holoenenzyme interacts with Escherichia phage T7 protein Ocr; this interaction leads to the inhibition of the restriction activity, but may still allow methylation and translocation.

It carries out the reaction a 2'-deoxyadenosine in DNA + S-adenosyl-L-methionine = an N(6)-methyl-2'-deoxyadenosine in DNA + S-adenosyl-L-homocysteine + H(+). The subtype gamma methyltransferase (M) subunit of a type I restriction enzyme. The M and S subunits together form a methyltransferase (MTase) that methylates A-3 on the top and bottom strand of the sequence 5'-GAAN(6)RTCG-3' (for EcoR124I) and 5'-GAAN(7)RTCG-3' (for EcoR124II). In the presence of the R subunit the complex can also act as an endonuclease, binding to the same target sequence but cutting the DNA some distance from this site. Whether the DNA is cut or modified depends on the methylation state of the target sequence. When the target site is unmodified, the DNA is cut. When the target site is hemimethylated, the complex acts as a maintenance MTase modifying the DNA so that both strands become methylated. After locating a non-methylated recognition site, the enzyme complex serves as a molecular motor that translocates DNA in an ATP-dependent manner until a collision occurs that triggers cleavage. The R(1)M(2)S(1) complex translocates an average of 555 bp/second on nicked DNA; the R(2)M(2)S(1) complex translocates at double that speed. The 2 R subunit motors are independent and track along the helical pitch of the DNA, inducing positive supercoiling ahead of themselves. The polypeptide is Type I restriction enzyme EcoR124I/EcoR124II methylase subunit (hsdM) (Escherichia coli).